The chain runs to 607 residues: Rap1 GTPase-GDP dissociation stimulator 1 (607 aa).

Positions 4–13 (LSDTLKKLKI) match the Nuclear export signal (NES) motif. ARM repeat units lie at residues 89–131 (GLIS…DQAG) and 170–211 (DSLQ…NLAE). The interval 122–170 (EGRSAVDQAGGAQIVIDHLRSLCSITDPANEKLLTVFCGMLMNYSNEND) is prevents binding to prenylated RHOA. An N6-acetyllysine modification is found at K230. Positions 239-255 (DKREMIFEVLAPLAEND) are interacts with polybasic regions in GTPases. ARM repeat units follow at residues 347 to 390 (DANC…NLAI), 391 to 431 (PVIN…MLID), and 479 to 519 (SKDV…LIAA). The tract at residues 379–428 (HAALSALRNLAIPVINKAKMLSAGVTEAVLKFLKSEMPPVQFKLLGTLRM) is critical for catalytic activity.

As to quaternary structure, interacts with RABL3. Interacts with RHOT1. Interacts with unprenylated RHOA; the interaction is direct. Interacts with RAP1A. Interacts with KRAS. Interacts with RAC1. Interacts with RAP1B. Preferentially interacts with unprenylated GTPases that will become geranylgeranylated. May also interact with prenylated GTPases. In terms of assembly, interacts with prenylated RHOA; the interaction is direct and in a 1:1 stoichiometry. Interacts with RAP1A. Interacts with KRAS. Interacts with RAC1. Interacts with RAP1B. Preferentially interacts with prenylated GTPases. Forms covalent cross-links mediated by transglutaminase TGM2, between a glutamine and the epsilon-amino group of a lysine residue, forming homopolymers and heteropolymers.

The protein localises to the cytoplasm. Its subcellular location is the cytosol. It localises to the endoplasmic reticulum. It is found in the mitochondrion. The protein resides in the nucleus. In terms of biological role, acts as a GEF (guanine nucleotide exchange factor) for the Rho family of small GTP-binding proteins (G proteins) that stimulates the dissociation of GDP to enable subsequent binding of GTP. Additionally, appears to chaperone the processing and/or trafficking of small GTPases containing a C-terminal polybasic region independently of GEF activity. Targets include RAP1A/RAP1B, RHOA, RHOB, RHOC, RAC1 and KRAS. Regulates mitochondrial dynamics by controlling RHOT function to promote mitochondrial fission during high calcium conditions. Able to promote the Ca(2+) release from the endoplasmic reticulum via both inositol trisphosphate (Ins3P) and ryanodine sensitive receptors leading to a enhanced mitochondrial Ca(2+) uptake. Functionally, acts as a GEF (guanine nucleotide exchange factor) for unprenylated RHOA. Chaperones the entry and passage of small GTPases through the prenylation pathway. Recognizes the last amino acid in the GTPase C-terminal CAAX motif with a preference for 'Leu' over 'Met', indicating involvement in the geranylgeranylation pathway. Acts as a GEF (guanine nucleotide exchange factor) for prenylated RHOA. Acts as a GEF for RHOC. Chaperones the downstream trafficking and/or processing of small newly prenylated GTPases. Escorts RAC1 to the nucleus. The sequence is that of Rap1 GTPase-GDP dissociation stimulator 1 from Homo sapiens (Human).